We begin with the raw amino-acid sequence, 137 residues long: ATP synthase epsilon chain, chloroplastic (137 aa).

The protein belongs to the ATPase epsilon chain family. As to quaternary structure, F-type ATPases have 2 components, CF(1) - the catalytic core - and CF(0) - the membrane proton channel. CF(1) has five subunits: alpha(3), beta(3), gamma(1), delta(1), epsilon(1). CF(0) has three main subunits: a, b and c.

It is found in the plastid. It localises to the chloroplast thylakoid membrane. In terms of biological role, produces ATP from ADP in the presence of a proton gradient across the membrane. The chain is ATP synthase epsilon chain, chloroplastic from Pinus koraiensis (Korean pine).